The chain runs to 161 residues: uncharacterized protein (161 aa).

The next 4 membrane-spanning stretches (helical) occupy residues Leu-22 to His-42, Leu-43 to Val-63, Leu-89 to Gly-109, and Val-110 to Leu-130. The tract at residues Val-141–Asp-161 is disordered.

The protein to M.leprae ML1138.

Its subcellular location is the cell membrane. This is an uncharacterized protein from Mycobacterium bovis (strain ATCC BAA-935 / AF2122/97).